Reading from the N-terminus, the 441-residue chain is Trigger factor (441 aa).

Residues 175-260 (GDKVVIDYNS…LVSIMVPKDV (86 aa)) enclose the PPIase FKBP-type domain.

Belongs to the FKBP-type PPIase family. Tig subfamily.

The protein localises to the cytoplasm. The enzyme catalyses [protein]-peptidylproline (omega=180) = [protein]-peptidylproline (omega=0). Functionally, involved in protein export. Acts as a chaperone by maintaining the newly synthesized protein in an open conformation. Functions as a peptidyl-prolyl cis-trans isomerase. The sequence is that of Trigger factor from Anaplasma marginale (strain St. Maries).